The following is a 224-amino-acid chain: UPF0758 protein Pmen_4376 (224 aa).

The 123-residue stretch at 102–224 folds into the MPN domain; that stretch reads ALESPQAVRD…PLSMAELGWM (123 aa). His173, His175, and Asp186 together coordinate Zn(2+). The JAMM motif signature appears at 173–186; that stretch reads HNHPSGVCEPSQAD.

The protein belongs to the UPF0758 family.

The sequence is that of UPF0758 protein Pmen_4376 from Ectopseudomonas mendocina (strain ymp) (Pseudomonas mendocina).